A 977-amino-acid chain; its full sequence is Myb-like protein I (977 aa).

Positions 1 to 122 (MMNNQSMVRY…QQQQQQLDKS (122 aa)) are disordered. Residues 21-39 (PSPPVYSPIYRSPPPPPQP) are compositionally biased toward pro residues. Basic and acidic residues predominate over residues 52–68 (DNSHHQVMDNSDHEQQQ). The span at 75-118 (QQQQQQQHHHQQQQQQQHHQQQQQQHHQQQQQHHHQQQQQQQQQ) shows a compositional bias: low complexity. The HTH myb-type domain occupies 167-222 (EKKKQSRYWTPEEHSRFIEALSKYGHKDVKSISQYVSTRNPTQVRTHAQKYFLRID). A DNA-binding region (H-T-H motif) is located at residues 195-218 (VKSISQYVSTRNPTQVRTHAQKYF). 5 disordered regions span residues 229–331 (LESK…SSPL), 422–516 (INNN…SSQP), 531–650 (NNNN…QQQM), 738–853 (LNSN…WPGP), and 872–960 (NYVP…GMNQ). Over residues 241 to 252 (KDDDWLREEYND) the composition is skewed to acidic residues. Residues 254–275 (GSPTQYSSCSNSPTTNSVANPF) are compositionally biased toward polar residues. Low complexity-rich tracts occupy residues 276–329 (SNSL…GNSS) and 422–504 (INNN…INNN). Over residues 505-516 (GPNSPNLLSSQP) the composition is skewed to polar residues. Positions 738 to 754 (LNSNSGNSSPNISSING) are enriched in low complexity. Polar residues predominate over residues 783–797 (LSGSPSHSPAQSPHY). Low complexity-rich tracts occupy residues 798-848 (NLNN…SHSI) and 887-943 (SPHF…GSGS). The segment covering 944–960 (WHQYQATDSPTGWGMNQ) has biased composition (polar residues).

The protein localises to the nucleus. The protein is Myb-like protein I (mybI) of Dictyostelium discoideum (Social amoeba).